Consider the following 427-residue polypeptide: Ribose-phosphate pyrophosphokinase 1 (427 aa).

3 residues coordinate Mg(2+): Asp-128, His-130, and Asp-143. Ser-199, Ser-218, Ser-271, and Ser-295 each carry phosphoserine.

It belongs to the ribose-phosphate pyrophosphokinase family.

The protein resides in the cytoplasm. The enzyme catalyses D-ribose 5-phosphate + ATP = 5-phospho-alpha-D-ribose 1-diphosphate + AMP + H(+). The protein operates within metabolic intermediate biosynthesis; 5-phospho-alpha-D-ribose 1-diphosphate biosynthesis; 5-phospho-alpha-D-ribose 1-diphosphate from D-ribose 5-phosphate (route I): step 1/1. In terms of biological role, 5-phosphoribose 1-diphosphate synthase involved in nucleotide, histidine, and tryptophan biosynthesis. Active in heteromultimeric complexes with other 5-phosphoribose 1-diphosphate synthases (PRS2, PRS3, PRS4 and PRS5). This Saccharomyces cerevisiae (strain ATCC 204508 / S288c) (Baker's yeast) protein is Ribose-phosphate pyrophosphokinase 1 (PRS1).